A 363-amino-acid polypeptide reads, in one-letter code: NADH-quinone oxidoreductase subunit H (363 aa).

10 helical membrane-spanning segments follow: residues 29 to 49 (VLKILLIAVPVIVTVAFYVVW), 62 to 82 (GPMYVGMGIFQAFADVFKLLF), 96 to 116 (FIIAPLLTLAPAFAAWSVVPF), 127 to 147 (VGLLYLLAMTSLGVYGIILAG), 163 to 183 (AAQVVSYEIAMGFALVGVMIA), 202 to 222 (FFDWFLIPLFPLFIVYWVSGV), 239 to 257 (IVAGHMVEYSGGAFALFFL), 264 to 286 (ILVSFLISIFFLGGWLSPIQGWV), 299 to 319 (TGGWPWLLMKVFFFASAYIWF), and 339 to 359 (FIPLTIVWIAVTALMVFYGVI).

Belongs to the complex I subunit 1 family. NDH-1 is composed of 14 different subunits. Subunits NuoA, H, J, K, L, M, N constitute the membrane sector of the complex.

The protein resides in the cell inner membrane. It catalyses the reaction a quinone + NADH + 5 H(+)(in) = a quinol + NAD(+) + 4 H(+)(out). Functionally, NDH-1 shuttles electrons from NADH, via FMN and iron-sulfur (Fe-S) centers, to quinones in the respiratory chain. The immediate electron acceptor for the enzyme in this species is believed to be ubiquinone. Couples the redox reaction to proton translocation (for every two electrons transferred, four hydrogen ions are translocated across the cytoplasmic membrane), and thus conserves the redox energy in a proton gradient. This subunit may bind ubiquinone. This is NADH-quinone oxidoreductase subunit H from Xanthomonas campestris pv. campestris (strain 8004).